A 490-amino-acid chain; its full sequence is GDP-fucose protein O-fucosyltransferase 2 (490 aa).

Residues 1–25 (MRGSWPRLGFPALLLLLHLLTGSDA) form the signal peptide. N-linked (GlcNAc...) asparagine glycans are attached at residues N29 and N79. 81–85 (SEGFN) contacts GDP-beta-L-fucose. The Proton acceptor role is filled by E82. A disulfide bridge connects residues C203 and C226. 336–338 (HLR) lines the GDP-beta-L-fucose pocket. N-linked (GlcNAc...) asparagine glycosylation is present at N368. GDP-beta-L-fucose contacts are provided by residues D418 and 435–436 (TF). A disulfide bridge connects residues C459 and C466.

The protein belongs to the glycosyltransferase 68 family.

It is found in the endoplasmic reticulum. Its subcellular location is the golgi apparatus. It catalyses the reaction L-seryl-[protein] + GDP-beta-L-fucose = 3-O-(alpha-L-fucosyl)-L-seryl-[protein] + GDP + H(+). The catalysed reaction is L-threonyl-[protein] + GDP-beta-L-fucose = 3-O-(alpha-L-fucosyl)-L-threonyl-[protein] + GDP + H(+). It participates in protein modification; protein glycosylation. Does not require divalent metal ions for optimal activity. Functionally, catalyzes the reaction that attaches fucose through an O-glycosidic linkage to a conserved serine or threonine residue in the consensus sequence C1-X-X-S/T-C2 of thrombospondin type I repeats (TSRs) where C1 and C2 are the first and second cysteines of the repeat, respectively. O-fucosylates members of several protein families including the ADAMTS, the thrombospondin (TSP) and spondin families. In Drosophila melanogaster (Fruit fly), this protein is GDP-fucose protein O-fucosyltransferase 2.